The following is a 503-amino-acid chain: AMP phosphorylase (503 aa).

AMP-binding positions include Gly-168, 194–199, and Thr-203; that span reads SRAITS. Asp-256 functions as the Proton donor in the catalytic mechanism. Residues Ser-264 and Lys-288 each contribute to the AMP site.

The protein belongs to the thymidine/pyrimidine-nucleoside phosphorylase family. Type 2 subfamily. Forms an exceptionally large macromolecular structure (&gt;40-mers) in solution.

The catalysed reaction is AMP + phosphate = alpha-D-ribose 1,5-bisphosphate + adenine. The enzyme catalyses CMP + phosphate = cytosine + alpha-D-ribose 1,5-bisphosphate. It catalyses the reaction UMP + phosphate = alpha-D-ribose 1,5-bisphosphate + uracil. With respect to regulation, AMP phosphorolysis is allosterically regulated by the substrate AMP. Its function is as follows. Catalyzes the conversion of AMP and phosphate to adenine and ribose 1,5-bisphosphate (R15P). Exhibits phosphorylase activity toward CMP, dCMP and UMP in addition to AMP. Functions in an archaeal AMP degradation pathway, together with R15P isomerase and RubisCO. This is AMP phosphorylase from Thermococcus kodakarensis (strain ATCC BAA-918 / JCM 12380 / KOD1) (Pyrococcus kodakaraensis (strain KOD1)).